The primary structure comprises 82 residues: UPF0298 protein SPCG_0698 (82 aa).

This sequence belongs to the UPF0298 family.

Its subcellular location is the cytoplasm. In Streptococcus pneumoniae (strain CGSP14), this protein is UPF0298 protein SPCG_0698.